The chain runs to 161 residues: MKVLYPGSFDPLTLGHLDLIHRASVLYEEVIIAVLENSTKSPTFSVSRRIEQIKESTKELSKIKILSYKGLTVECAKSLDVDFILRGLRAMSDFEYELQIAHTNRSIDKSIETIFLATEARHSFLSSSVVKEVAMFGGNIDHMVPAIVAKDLYKIYKQGDI.

Ser-8 serves as a coordination point for substrate. Residues 8-9 and His-16 contribute to the ATP site; that span reads SF. Residues Lys-40, Thr-72, and Arg-86 each coordinate substrate. Residues 87–89, Glu-97, and 122–128 contribute to the ATP site; these read GLR and HSFLSSS.

This sequence belongs to the bacterial CoaD family. In terms of assembly, homohexamer. Mg(2+) is required as a cofactor.

It localises to the cytoplasm. It catalyses the reaction (R)-4'-phosphopantetheine + ATP + H(+) = 3'-dephospho-CoA + diphosphate. Its pathway is cofactor biosynthesis; coenzyme A biosynthesis; CoA from (R)-pantothenate: step 4/5. Its function is as follows. Reversibly transfers an adenylyl group from ATP to 4'-phosphopantetheine, yielding dephospho-CoA (dPCoA) and pyrophosphate. The polypeptide is Phosphopantetheine adenylyltransferase (Prochlorococcus marinus (strain SARG / CCMP1375 / SS120)).